The primary structure comprises 125 residues: Protein Bouncer (125 aa).

The N-terminal stretch at 1–18 is a signal peptide; the sequence is MGCVLLFLLLVCVPVVLP. 5 cysteine pairs are disulfide-bonded: Cys-23–Cys-48, Cys-26–Cys-35, Cys-42–Cys-66, Cys-72–Cys-91, and Cys-92–Cys-97. The 76-residue stretch at 23–98 folds into the UPAR/Ly6 domain; the sequence is CLFCPVTSLN…FSCCGGHYCN (76 aa). A glycan (N-linked (GlcNAc...) asparagine) is linked at Asn-32. N-linked (GlcNAc...) asparagine glycosylation is present at Asn-84. Asn-98 carries the GPI-anchor amidated asparagine lipid modification. Positions 99–125 are cleaved as a propeptide — removed in mature form; it reads SQPRAEPGGRLLLLLLPAAALTAAGAL.

Belongs to the SPACA4/bouncer family. Interacts with spermatocyte complex composed of izumo1, spaca6 and tmem81. In terms of processing, N-glycosylated. In terms of tissue distribution, highly expressed in oocytes. Not expressed in testis.

It localises to the cell membrane. Its function is as follows. Oocyte-expressed fertilization factor that mediates sperm-egg binding and is essential for sperm entry into the egg. Necessary and sufficient to mediate species-specific gamete recognition and fertilization, which is essential for vertebrate species performing external fertilization. External fertilization cannot guarantee that only conspecific sperm reaches the egg by precopulatory mate choice: proteins such as Bouncer can therefore support the selection of conspecific sperm. This is Protein Bouncer from Danio rerio (Zebrafish).